Consider the following 465-residue polypeptide: Ribulose bisphosphate carboxylase large chain (465 aa).

Position 4 is an N6,N6,N6-trimethyllysine (Lys4). Residues Asn113 and Thr163 each coordinate substrate. Residue Lys165 is the Proton acceptor of the active site. Lys167 contacts substrate. Mg(2+) contacts are provided by Lys191, Asp193, and Glu194. An N6-carboxylysine modification is found at Lys191. His284 (proton acceptor) is an active-site residue. Substrate is bound by residues Arg285, His317, and Ser369.

Belongs to the RuBisCO large chain family. Type I subfamily. Heterohexadecamer of 8 large chains and 8 small chains; disulfide-linked. The disulfide link is formed within the large subunit homodimers. Requires Mg(2+) as cofactor. Post-translationally, the disulfide bond which can form in the large chain dimeric partners within the hexadecamer appears to be associated with oxidative stress and protein turnover.

Its subcellular location is the plastid. The protein localises to the chloroplast. It catalyses the reaction 2 (2R)-3-phosphoglycerate + 2 H(+) = D-ribulose 1,5-bisphosphate + CO2 + H2O. The enzyme catalyses D-ribulose 1,5-bisphosphate + O2 = 2-phosphoglycolate + (2R)-3-phosphoglycerate + 2 H(+). RuBisCO catalyzes two reactions: the carboxylation of D-ribulose 1,5-bisphosphate, the primary event in carbon dioxide fixation, as well as the oxidative fragmentation of the pentose substrate in the photorespiration process. Both reactions occur simultaneously and in competition at the same active site. The chain is Ribulose bisphosphate carboxylase large chain from Bauera rubioides (Dog rose).